The primary structure comprises 81 residues: Anaphase-promoting complex subunit emb-1 (81 aa).

The APC/C is probably composed of at least 12 subunits: apc-2, apc-10, apc-11, cdc-26, emb-1, emb-27, emb-30, mat-1, mat-2, mat-3, such-1 and gfi-3. In terms of tissue distribution, expressed in germ cells.

It participates in protein modification; protein ubiquitination. Functionally, probable component of the anaphase promoting complex/cyclosome (APC/C), a cell cycle-regulated E3 ubiquitin ligase that controls progression through mitosis and the G1 phase of the cell cycle. The APC/C complex acts by mediating ubiquitination and subsequent degradation of target proteins. Developmental role in early embryogenesis and the metaphase to anaphase transition in meiosis and mitosis. May be required for germline proliferation. Required for male tail development and hermaphrodite vulva formation. The chain is Anaphase-promoting complex subunit emb-1 from Caenorhabditis elegans.